The chain runs to 450 residues: Succinate-semialdehyde dehydrogenase (450 aa).

119–120 (WN) contributes to the NADP(+) binding site. Arg128 lines the substrate pocket. NADP(+)-binding positions include 143–146 (KPAK) and 197–198 (GS). Glu219 acts as the Proton acceptor in catalysis. Leu220 is an NADP(+) binding site. Residues Arg247 and Cys253 each coordinate substrate. The active-site Nucleophile is Cys253. NADP(+) is bound at residue Glu350. Ser410 contributes to the substrate binding site.

The protein belongs to the aldehyde dehydrogenase family. As to quaternary structure, homodimer.

The catalysed reaction is succinate semialdehyde + NAD(+) + H2O = succinate + NADH + 2 H(+). The enzyme catalyses succinate semialdehyde + NADP(+) + H2O = succinate + NADPH + 2 H(+). The protein operates within alkaloid degradation; nicotine degradation. Its function is as follows. Catalyzes the NAD(P)(+)-dependent oxidation of succinate semialdehyde to succinate, which may enter the citric acid cycle. Is involved in the catabolism of 4-methylaminobutanoate produced from nicotine. Acts preferentially with NADP(+) as cosubstrate but can also use NAD(+). To a lesser extent, is active also towards butyraldehyde (8.5% of the activity observed with succinate semialdehyde) and propionaldehyde (1.6% of the activity observed with succinate semialdehyde) as substrates. The sequence is that of Succinate-semialdehyde dehydrogenase (sad) from Paenarthrobacter nicotinovorans (Arthrobacter nicotinovorans).